Here is a 561-residue protein sequence, read N- to C-terminus: Urocanate hydratase (561 aa).

NAD(+) contacts are provided by residues 52-53 (GG), Q130, 176-178 (GMG), E196, R201, 242-243 (NA), 263-267 (QTSAH), 273-274 (YL), and Y322. C410 is an active-site residue. NAD(+) is bound at residue G492.

The protein belongs to the urocanase family. Requires NAD(+) as cofactor.

The protein localises to the cytoplasm. It carries out the reaction 4-imidazolone-5-propanoate = trans-urocanate + H2O. It participates in amino-acid degradation; L-histidine degradation into L-glutamate; N-formimidoyl-L-glutamate from L-histidine: step 2/3. Its function is as follows. Catalyzes the conversion of urocanate to 4-imidazolone-5-propionate. In Salmonella newport (strain SL254), this protein is Urocanate hydratase.